We begin with the raw amino-acid sequence, 248 residues long: Mannosylfructose-phosphate phosphatase (248 aa).

This sequence belongs to the sucrose phosphatase family.

It carries out the reaction beta-D-fructofuranosyl alpha-D-mannopyranoside 6(F)-phosphate + H2O = beta-D-fructofuranosyl alpha-D-mannopyranoside + phosphate. It participates in carbohydrate metabolism; mannosylfructose biosynthesis; beta-D-fructofuranosyl alpha-D-mannopyranoside from D-fructose 6-phosphate and GDP-alpha-D-mannose: step 2/2. Its activity is regulated as follows. Inhibited by the phosphatase inhibitors fluoride, molybdate and orthovanadate. This is Mannosylfructose-phosphate phosphatase from Agrobacterium fabrum (strain C58 / ATCC 33970) (Agrobacterium tumefaciens (strain C58)).